The primary structure comprises 36 residues: MIDLNFPSIFVPLVGLVFPAIAMASLSLYVQRNKIV.

Residues 9 to 29 (IFVPLVGLVFPAIAMASLSLY) form a helical membrane-spanning segment.

This sequence belongs to the PsaI family.

The protein localises to the plastid. Its subcellular location is the chloroplast thylakoid membrane. Its function is as follows. May help in the organization of the PsaL subunit. This is Photosystem I reaction center subunit VIII from Phalaenopsis aphrodite subsp. formosana (Moth orchid).